The sequence spans 161 residues: ATP synthase subunit b 1 (161 aa).

A helical transmembrane segment spans residues 5 to 25 (EFWVAVAFVIFCGIVWKAGGF).

Belongs to the ATPase B chain family. As to quaternary structure, F-type ATPases have 2 components, F(1) - the catalytic core - and F(0) - the membrane proton channel. F(1) has five subunits: alpha(3), beta(3), gamma(1), delta(1), epsilon(1). F(0) has three main subunits: a(1), b(2) and c(10-14). The alpha and beta chains form an alternating ring which encloses part of the gamma chain. F(1) is attached to F(0) by a central stalk formed by the gamma and epsilon chains, while a peripheral stalk is formed by the delta and b chains.

It localises to the cell inner membrane. Functionally, f(1)F(0) ATP synthase produces ATP from ADP in the presence of a proton or sodium gradient. F-type ATPases consist of two structural domains, F(1) containing the extramembraneous catalytic core and F(0) containing the membrane proton channel, linked together by a central stalk and a peripheral stalk. During catalysis, ATP synthesis in the catalytic domain of F(1) is coupled via a rotary mechanism of the central stalk subunits to proton translocation. Its function is as follows. Component of the F(0) channel, it forms part of the peripheral stalk, linking F(1) to F(0). This Methylobacterium sp. (strain 4-46) protein is ATP synthase subunit b 1.